A 48-amino-acid chain; its full sequence is Large ribosomal subunit protein bL34 (48 aa).

Belongs to the bacterial ribosomal protein bL34 family.

This Mycoplasma pneumoniae (strain ATCC 29342 / M129 / Subtype 1) (Mycoplasmoides pneumoniae) protein is Large ribosomal subunit protein bL34 (rpmH).